Here is a 106-residue protein sequence, read N- to C-terminus: UPF0145 protein Athe_0545 (106 aa).

It belongs to the UPF0145 family.

The sequence is that of UPF0145 protein Athe_0545 from Caldicellulosiruptor bescii (strain ATCC BAA-1888 / DSM 6725 / KCTC 15123 / Z-1320) (Anaerocellum thermophilum).